The sequence spans 209 residues: uncharacterized protein (209 aa).

The signal sequence occupies residues 1–17 (MKKLVTGLLALSLFLAA). Residues 17–106 (ACGQDSDQQK…SGQTTNNQKS (90 aa)) form a disordered region. Cys-18 carries the N-palmitoyl cysteine lipid modification. The S-diacylglycerol cysteine moiety is linked to residue Cys-18. A compositionally biased stretch (basic and acidic residues) spans 23–70 (DQQKDSNKEKDDKAKTEQQDKKTNDSSKDKKDNKDDSKDVNKDNKDNS). The span at 71-106 (ANDNQQQSNSNATNNDQNQTNNNQSNSGQTTNNQKS) shows a compositional bias: low complexity.

It localises to the cell membrane. This is an uncharacterized protein from Staphylococcus aureus (strain MRSA252).